Here is a 664-residue protein sequence, read N- to C-terminus: Cyclic nucleotide-gated channel alpha-2 (664 aa).

Polar residues predominate over residues Met-1–Lys-10. The disordered stretch occupies residues Met-1 to Glu-51. The Cytoplasmic segment spans residues Met-1 to Leu-146. A helical membrane pass occupies residues Phe-147 to Asp-168. Topologically, residues Leu-169–Leu-178 are extracellular. The helical transmembrane segment at Val-179 to Gly-199 threads the bilayer. The Cytoplasmic segment spans residues Phe-200–Lys-224. The chain crosses the membrane as a helical span at residues Leu-225–His-243. The Extracellular segment spans residues Ser-244–Arg-248. The helical transmembrane segment at Phe-249–Thr-267 threads the bilayer. The Cytoplasmic portion of the chain corresponds to Arg-268 to Ile-274. Residues Pro-272–Met-380 are ion conduction pathway. A helical membrane pass occupies residues Phe-275–Ile-298. At Ser-299 to Tyr-321 the chain is on the extracellular side. A run of 2 helical transmembrane segments spans residues Leu-322 to Ile-356 and Phe-357 to Asn-381. Residues Thr-339–Glu-342 form a selectivity filter region. The tract at residues Ala-382–Gln-458 is C-linker. Topologically, residues Ala-382–Glu-664 are cytoplasmic. Positions Ala-462–Lys-582 are cyclic nucleotide-binding domain. 3',5'-cyclic GMP contacts are provided by Gly-522, Ser-525, Arg-538, and Thr-539. Positions 538 and 539 each coordinate 3',5'-cyclic AMP. A coiled-coil region spans residues Val-599–Asp-653.

The protein belongs to the cyclic nucleotide-gated cation channel (TC 1.A.1.5) family. CNGA2 subfamily. The olfactory cyclic nucleotide-gated channel is an heterotetramer composed of CNGA2, CNGA4 and CNGB1b subunits with 2:1:1 stoichiometry. In terms of tissue distribution, olfactory neurons. Widely expressed in brain, enriched in deep cerebellar nuclei, olfactory bulb mitral cells and cerebellar Purkinje neurons. Expressed in olfactory sensory cilia (at protein level).

It localises to the cell projection. Its subcellular location is the cilium membrane. The enzyme catalyses Ca(2+)(in) = Ca(2+)(out). It catalyses the reaction Na(+)(in) = Na(+)(out). It carries out the reaction K(+)(in) = K(+)(out). The catalysed reaction is NH4(+)(in) = NH4(+)(out). The enzyme catalyses Rb(+)(in) = Rb(+)(out). It catalyses the reaction Li(+)(in) = Li(+)(out). It carries out the reaction Cs(+)(in) = Cs(+)(out). The channel activity is inhibited by L-cis diltiazem. Pore-forming subunit of the olfactory cyclic nucleotide-gated channel. Operates in the cilia of olfactory sensory neurons where chemical stimulation of the odorant is converted to an electrical signal. Mediates odorant-induced cAMP-dependent Ca(2+) influx triggering neuron depolarization. The rise of intracellular Ca(2+) levels potentiates the olfactory response by activating Ca(2+)-dependent Cl(-) channels, but it also serves as a negative feedback signal to desensitize the channel for rapid adaptation to odorants. Conducts cAMP- and cGMP-gated ion currents, with permeability for monovalent and divalent cations. This Rattus norvegicus (Rat) protein is Cyclic nucleotide-gated channel alpha-2.